Consider the following 461-residue polypeptide: tRNA modification GTPase MnmE (461 aa).

(6S)-5-formyl-5,6,7,8-tetrahydrofolate contacts are provided by Arg-27, Glu-89, and Arg-128. The 159-residue stretch at 224–382 (GLKTAIVGRP…LEALIKKLFF (159 aa)) folds into the TrmE-type G domain. Residue Asn-234 coordinates K(+). Residues 234-239 (NVGKSS), 253-259 (TDVAGTT), and 278-281 (DTAG) contribute to the GTP site. Ser-238 lines the Mg(2+) pocket. K(+)-binding residues include Thr-253, Val-255, and Thr-258. Residue Thr-259 coordinates Mg(2+). Lys-461 provides a ligand contact to (6S)-5-formyl-5,6,7,8-tetrahydrofolate.

It belongs to the TRAFAC class TrmE-Era-EngA-EngB-Septin-like GTPase superfamily. TrmE GTPase family. As to quaternary structure, homodimer. Heterotetramer of two MnmE and two MnmG subunits. It depends on K(+) as a cofactor.

The protein resides in the cytoplasm. In terms of biological role, exhibits a very high intrinsic GTPase hydrolysis rate. Involved in the addition of a carboxymethylaminomethyl (cmnm) group at the wobble position (U34) of certain tRNAs, forming tRNA-cmnm(5)s(2)U34. The polypeptide is tRNA modification GTPase MnmE (Lactobacillus delbrueckii subsp. bulgaricus (strain ATCC BAA-365 / Lb-18)).